The primary structure comprises 419 residues: Enolase (419 aa).

Residue Gln161 participates in (2R)-2-phosphoglycerate binding. Catalysis depends on Glu205, which acts as the Proton donor. Asp240, Glu283, and Asp309 together coordinate Mg(2+). Residues Lys334, Arg363, Ser364, and Lys385 each contribute to the (2R)-2-phosphoglycerate site. The active-site Proton acceptor is the Lys334.

This sequence belongs to the enolase family. Requires Mg(2+) as cofactor.

Its subcellular location is the cytoplasm. The protein resides in the secreted. It is found in the cell surface. The catalysed reaction is (2R)-2-phosphoglycerate = phosphoenolpyruvate + H2O. It participates in carbohydrate degradation; glycolysis; pyruvate from D-glyceraldehyde 3-phosphate: step 4/5. Its function is as follows. Catalyzes the reversible conversion of 2-phosphoglycerate (2-PG) into phosphoenolpyruvate (PEP). It is essential for the degradation of carbohydrates via glycolysis. The polypeptide is Enolase (Saccharolobus islandicus (strain Y.N.15.51 / Yellowstone #2) (Sulfolobus islandicus)).